The chain runs to 560 residues: Putative transport protein PBPRA2420 (560 aa).

The next 5 helical transmembrane spans lie at 5–25 (VASL…AVGL), 37–57 (VGNS…GFTF), 66–86 (FMLF…GIFF), 91–111 (HYLL…LAMT), and 161–181 (SLSV…IFLA). RCK C-terminal domains are found at residues 203–292 (RGIG…FRNG) and 293–377 (KEVF…IGFI). 6 consecutive transmembrane segments (helical) span residues 386–406 (LLAF…TLAF), 409–429 (VAFG…LGFL), 452–472 (LMVF…DSFA), 477–497 (MVLV…YLFG), 506–526 (ALLF…DMIN), and 539–559 (AGTY…IIIM).

This sequence belongs to the AAE transporter (TC 2.A.81) family. YbjL subfamily.

The protein localises to the cell membrane. This Photobacterium profundum (strain SS9) protein is Putative transport protein PBPRA2420.